Reading from the N-terminus, the 360-residue chain is Peptide chain release factor 1 (360 aa).

At glutamine 237 the chain carries N5-methylglutamine.

It belongs to the prokaryotic/mitochondrial release factor family. In terms of processing, methylated by PrmC. Methylation increases the termination efficiency of RF1.

It is found in the cytoplasm. Its function is as follows. Peptide chain release factor 1 directs the termination of translation in response to the peptide chain termination codons UAG and UAA. In Pseudomonas putida (strain W619), this protein is Peptide chain release factor 1.